Reading from the N-terminus, the 333-residue chain is Glycerol-3-phosphate dehydrogenase [NAD(P)+] (333 aa).

Residues Trp13, Lys33, and Lys108 each coordinate NADPH. Positions 108 and 138 each coordinate sn-glycerol 3-phosphate. Ser142 serves as a coordination point for NADPH. The sn-glycerol 3-phosphate site is built by Lys193, Asp246, Ser256, Arg257, and Asn258. The active-site Proton acceptor is the Lys193. NADPH is bound at residue Arg257. Residues Val281 and Glu283 each contribute to the NADPH site.

Belongs to the NAD-dependent glycerol-3-phosphate dehydrogenase family.

It is found in the cytoplasm. The enzyme catalyses sn-glycerol 3-phosphate + NAD(+) = dihydroxyacetone phosphate + NADH + H(+). It catalyses the reaction sn-glycerol 3-phosphate + NADP(+) = dihydroxyacetone phosphate + NADPH + H(+). The protein operates within membrane lipid metabolism; glycerophospholipid metabolism. Catalyzes the reduction of the glycolytic intermediate dihydroxyacetone phosphate (DHAP) to sn-glycerol 3-phosphate (G3P), the key precursor for phospholipid synthesis. This Bifidobacterium longum (strain DJO10A) protein is Glycerol-3-phosphate dehydrogenase [NAD(P)+].